A 215-amino-acid chain; its full sequence is Cytochrome b6 (215 aa).

A helical transmembrane segment spans residues 32-52 (IFYCLGGITLTCFLVQVATGF). Cys35 lines the heme c pocket. Heme b contacts are provided by His86 and His100. Helical transmembrane passes span 90 to 110 (ASMMVLMMILHVFRVYLTGGF), 116 to 136 (LTWVTGVILAVLTASFGVTGY), and 186 to 206 (LHTFVLPLLTAVFMLMHFSMI). Heme b contacts are provided by His187 and His202.

It belongs to the cytochrome b family. PetB subfamily. In terms of assembly, the 4 large subunits of the cytochrome b6-f complex are cytochrome b6, subunit IV (17 kDa polypeptide, PetD), cytochrome f and the Rieske protein, while the 4 small subunits are PetG, PetL, PetM and PetN. The complex functions as a dimer. It depends on heme b as a cofactor. Requires heme c as cofactor.

It localises to the plastid. Its subcellular location is the chloroplast thylakoid membrane. Its function is as follows. Component of the cytochrome b6-f complex, which mediates electron transfer between photosystem II (PSII) and photosystem I (PSI), cyclic electron flow around PSI, and state transitions. In Piper cenocladum (Ant piper), this protein is Cytochrome b6.